A 186-amino-acid chain; its full sequence is Ribosome maturation factor RimM (186 aa).

The PRC barrel domain occupies proline 93–leucine 166. The interval isoleucine 160–alanine 186 is disordered. Acidic residues predominate over residues aspartate 174–alanine 186.

Belongs to the RimM family. Binds ribosomal protein uS19.

Its subcellular location is the cytoplasm. Functionally, an accessory protein needed during the final step in the assembly of 30S ribosomal subunit, possibly for assembly of the head region. Essential for efficient processing of 16S rRNA. May be needed both before and after RbfA during the maturation of 16S rRNA. It has affinity for free ribosomal 30S subunits but not for 70S ribosomes. This is Ribosome maturation factor RimM from Streptomyces avermitilis (strain ATCC 31267 / DSM 46492 / JCM 5070 / NBRC 14893 / NCIMB 12804 / NRRL 8165 / MA-4680).